Reading from the N-terminus, the 270-residue chain is Proteasome subunit beta (270 aa).

The propeptide at 1-47 (MSNRGRLGDAFLRPGSSSFLDFLSDHAPELLPGRSAAAGNAPLAPHA) is removed in mature form; by autocatalysis. Residue T48 is the Nucleophile of the active site.

This sequence belongs to the peptidase T1B family. As to quaternary structure, the 20S proteasome core is composed of 14 alpha and 14 beta subunits that assemble into four stacked heptameric rings, resulting in a barrel-shaped structure. The two inner rings, each composed of seven catalytic beta subunits, are sandwiched by two outer rings, each composed of seven alpha subunits. The catalytic chamber with the active sites is on the inside of the barrel. Has a gated structure, the ends of the cylinder being occluded by the N-termini of the alpha-subunits. Is capped by the proteasome-associated ATPase, ARC.

Its subcellular location is the cytoplasm. The catalysed reaction is Cleavage of peptide bonds with very broad specificity.. The protein operates within protein degradation; proteasomal Pup-dependent pathway. The formation of the proteasomal ATPase ARC-20S proteasome complex, likely via the docking of the C-termini of ARC into the intersubunit pockets in the alpha-rings, may trigger opening of the gate for substrate entry. Interconversion between the open-gate and close-gate conformations leads to a dynamic regulation of the 20S proteasome proteolysis activity. Its function is as follows. Component of the proteasome core, a large protease complex with broad specificity involved in protein degradation. In Xylanimonas cellulosilytica (strain DSM 15894 / JCM 12276 / CECT 5975 / KCTC 9989 / LMG 20990 / NBRC 107835 / XIL07), this protein is Proteasome subunit beta.